The sequence spans 88 residues: Small ribosomal subunit protein uS17 (88 aa).

Belongs to the universal ribosomal protein uS17 family. As to quaternary structure, part of the 30S ribosomal subunit.

Functionally, one of the primary rRNA binding proteins, it binds specifically to the 5'-end of 16S ribosomal RNA. This Prochlorococcus marinus (strain SARG / CCMP1375 / SS120) protein is Small ribosomal subunit protein uS17.